Reading from the N-terminus, the 99-residue chain is A-type ATP synthase subunit F (99 aa).

This sequence belongs to the V-ATPase F subunit family. In terms of assembly, has multiple subunits with at least A(3), B(3), C, D, E, F, H, I and proteolipid K(x).

Its subcellular location is the cell membrane. In terms of biological role, component of the A-type ATP synthase that produces ATP from ADP in the presence of a proton gradient across the membrane. In Methanococcus maripaludis (strain C5 / ATCC BAA-1333), this protein is A-type ATP synthase subunit F.